A 360-amino-acid chain; its full sequence is Photosystem II protein D1 (360 aa).

Helical transmembrane passes span 29–46 (YIGW…TATS), 118–133 (HFLL…EWEL), and 142–156 (WIFV…AASA). H118 lines the chlorophyll a pocket. Y126 lines the pheophytin a pocket. 2 residues coordinate [CaMn4O5] cluster: D170 and E189. Residues 197–218 (FHMAGVAGVFGGSLFSAMHGSL) traverse the membrane as a helical segment. H198 contributes to the chlorophyll a binding site. Residues H215 and 264 to 265 (SF) each bind a quinone. Residue H215 coordinates Fe cation. Residue H272 participates in Fe cation binding. The chain crosses the membrane as a helical span at residues 274 to 288 (FLAAWPVVGIWLTAM). [CaMn4O5] cluster-binding residues include H332, E333, D342, and A344. Residues 345-360 (SGDVLPVALNAPAVNG) constitute a propeptide that is removed on maturation.

The protein belongs to the reaction center PufL/M/PsbA/D family. As to quaternary structure, PSII is composed of 1 copy each of membrane proteins PsbA, PsbB, PsbC, PsbD, PsbE, PsbF, PsbH, PsbI, PsbJ, PsbK, PsbL, PsbM, PsbT, PsbX, PsbY, PsbZ, Psb30/Ycf12, at least 3 peripheral proteins of the oxygen-evolving complex and a large number of cofactors. It forms dimeric complexes. The D1/D2 heterodimer binds P680, chlorophylls that are the primary electron donor of PSII, and subsequent electron acceptors. It shares a non-heme iron and each subunit binds pheophytin, quinone, additional chlorophylls, carotenoids and lipids. D1 provides most of the ligands for the Mn4-Ca-O5 cluster of the oxygen-evolving complex (OEC). There is also a Cl(-1) ion associated with D1 and D2, which is required for oxygen evolution. The PSII complex binds additional chlorophylls, carotenoids and specific lipids. serves as cofactor. Post-translationally, tyr-161 forms a radical intermediate that is referred to as redox-active TyrZ, YZ or Y-Z. In terms of processing, C-terminally processed by CTPA; processing is essential to allow assembly of the oxygen-evolving complex and thus photosynthetic growth.

It localises to the plastid. The protein resides in the chloroplast thylakoid membrane. The enzyme catalyses 2 a plastoquinone + 4 hnu + 2 H2O = 2 a plastoquinol + O2. Functionally, photosystem II (PSII) is a light-driven water:plastoquinone oxidoreductase that uses light energy to abstract electrons from H(2)O, generating O(2) and a proton gradient subsequently used for ATP formation. It consists of a core antenna complex that captures photons, and an electron transfer chain that converts photonic excitation into a charge separation. The D1/D2 (PsbA/PsbD) reaction center heterodimer binds P680, the primary electron donor of PSII as well as several subsequent electron acceptors. The sequence is that of Photosystem II protein D1 from Trieres chinensis (Marine centric diatom).